The primary structure comprises 195 residues: ATP-dependent Clp protease proteolytic subunit (195 aa).

Residue S97 is the Nucleophile of the active site. H122 is a catalytic residue.

Belongs to the peptidase S14 family. As to quaternary structure, fourteen ClpP subunits assemble into 2 heptameric rings which stack back to back to give a disk-like structure with a central cavity, resembling the structure of eukaryotic proteasomes.

The protein localises to the cytoplasm. The enzyme catalyses Hydrolysis of proteins to small peptides in the presence of ATP and magnesium. alpha-casein is the usual test substrate. In the absence of ATP, only oligopeptides shorter than five residues are hydrolyzed (such as succinyl-Leu-Tyr-|-NHMec, and Leu-Tyr-Leu-|-Tyr-Trp, in which cleavage of the -Tyr-|-Leu- and -Tyr-|-Trp bonds also occurs).. Functionally, cleaves peptides in various proteins in a process that requires ATP hydrolysis. Has a chymotrypsin-like activity. Plays a major role in the degradation of misfolded proteins. This is ATP-dependent Clp protease proteolytic subunit from Campylobacter hominis (strain ATCC BAA-381 / DSM 21671 / CCUG 45161 / LMG 19568 / NCTC 13146 / CH001A).